Here is a 67-residue protein sequence, read N- to C-terminus: uncharacterized protein (67 aa).

Residues 4–24 (WIFAILMLGVAIVLSIIATFF) form a helical membrane-spanning segment.

Its subcellular location is the membrane. This is an uncharacterized protein from Bacillus anthracis.